Consider the following 348-residue polypeptide: D-alanine--D-alanine ligase (348 aa).

The region spanning 132-334 is the ATP-grasp domain; sequence KRVLESAGIP…YAELIEELVR (203 aa). An ATP-binding site is contributed by 162–217; the sequence is EAVLSYPVFVKPANMGSSVGISKAESEEELRAAILLALTYDSRILIEQGVLAREIE. Mg(2+) is bound by residues aspartate 288, glutamate 301, and asparagine 303.

The protein belongs to the D-alanine--D-alanine ligase family. Mg(2+) is required as a cofactor. It depends on Mn(2+) as a cofactor.

The protein resides in the cytoplasm. It carries out the reaction 2 D-alanine + ATP = D-alanyl-D-alanine + ADP + phosphate + H(+). The protein operates within cell wall biogenesis; peptidoglycan biosynthesis. Its function is as follows. Cell wall formation. The chain is D-alanine--D-alanine ligase from Streptococcus equi subsp. equi (strain 4047).